A 160-amino-acid chain; its full sequence is Putative antiporter subunit mnhE2 (160 aa).

Transmembrane regions (helical) follow at residues 22 to 42 (HFKF…IYIL), 55 to 75 (IWVA…SSIS), and 100 to 120 (SDWS…STVI).

Belongs to the CPA3 antiporters (TC 2.A.63) subunit E family. May form a heterooligomeric complex that consists of seven subunits: mnhA2, mnhB2, mnhC2, mnhD2, mnhE2, mnhF2 and mnhG2.

The protein resides in the cell membrane. The protein is Putative antiporter subunit mnhE2 (mnhE2) of Staphylococcus aureus (strain USA300).